The sequence spans 512 residues: 2-isopropylmalate synthase (512 aa).

The region spanning 5–268 is the Pyruvate carboxyltransferase domain; that stretch reads LIIFDTTLRD…DVDIETQHIL (264 aa). D14, H202, H204, and N239 together coordinate Mn(2+). Residues 394–512 are regulatory domain; the sequence is SFVSLSQHSE…SKADRVAAQG (119 aa).

This sequence belongs to the alpha-IPM synthase/homocitrate synthase family. LeuA type 1 subfamily. Homodimer. Requires Mn(2+) as cofactor.

It is found in the cytoplasm. It carries out the reaction 3-methyl-2-oxobutanoate + acetyl-CoA + H2O = (2S)-2-isopropylmalate + CoA + H(+). It participates in amino-acid biosynthesis; L-leucine biosynthesis; L-leucine from 3-methyl-2-oxobutanoate: step 1/4. Its function is as follows. Catalyzes the condensation of the acetyl group of acetyl-CoA with 3-methyl-2-oxobutanoate (2-ketoisovalerate) to form 3-carboxy-3-hydroxy-4-methylpentanoate (2-isopropylmalate). The polypeptide is 2-isopropylmalate synthase (Albidiferax ferrireducens (strain ATCC BAA-621 / DSM 15236 / T118) (Rhodoferax ferrireducens)).